Consider the following 218-residue polypeptide: 1-Cys peroxiredoxin (218 aa).

Residues 4–164 (LTIGDTIPDL…VLRVVESLQK (161 aa)) enclose the Thioredoxin domain. Cysteine 46 acts as the Cysteine sulfenic acid (-SOH) intermediate in catalysis. The Bipartite nuclear localization signal signature appears at 194 to 217 (KEMFPQGFKTADLPSKKEYLRFTN).

This sequence belongs to the peroxiredoxin family. Prx6 subfamily.

Its subcellular location is the nucleus. It is found in the cytoplasm. The enzyme catalyses a hydroperoxide + [thioredoxin]-dithiol = an alcohol + [thioredoxin]-disulfide + H2O. Thiol-specific peroxidase that catalyzes the reduction of hydrogen peroxide and organic hydroperoxides to water and alcohols, respectively. Seems to contribute to the inhibition of germination during stress. This Medicago truncatula (Barrel medic) protein is 1-Cys peroxiredoxin.